The sequence spans 150 residues: Large ribosomal subunit protein bL9 (150 aa).

This sequence belongs to the bacterial ribosomal protein bL9 family.

In terms of biological role, binds to the 23S rRNA. The polypeptide is Large ribosomal subunit protein bL9 (Alteromonas mediterranea (strain DSM 17117 / CIP 110805 / LMG 28347 / Deep ecotype)).